The following is a 431-amino-acid chain: Enolase (431 aa).

Gln167 serves as a coordination point for (2R)-2-phosphoglycerate. Catalysis depends on Glu209, which acts as the Proton donor. Mg(2+) contacts are provided by Asp246, Glu290, and Asp317. Residues Lys342, Arg371, Ser372, and Lys393 each contribute to the (2R)-2-phosphoglycerate site. Lys342 serves as the catalytic Proton acceptor.

Belongs to the enolase family. As to quaternary structure, component of the RNA degradosome, a multiprotein complex involved in RNA processing and mRNA degradation. Mg(2+) is required as a cofactor.

The protein resides in the cytoplasm. The protein localises to the secreted. It is found in the cell surface. The catalysed reaction is (2R)-2-phosphoglycerate = phosphoenolpyruvate + H2O. Its pathway is carbohydrate degradation; glycolysis; pyruvate from D-glyceraldehyde 3-phosphate: step 4/5. In terms of biological role, catalyzes the reversible conversion of 2-phosphoglycerate (2-PG) into phosphoenolpyruvate (PEP). It is essential for the degradation of carbohydrates via glycolysis. The polypeptide is Enolase (Pectobacterium atrosepticum (strain SCRI 1043 / ATCC BAA-672) (Erwinia carotovora subsp. atroseptica)).